A 379-amino-acid chain; its full sequence is NAD-dependent protein deacetylase sirtuin-2 (379 aa).

Positions 1–10 are enriched in basic and acidic residues; that stretch reads MSEEVSKRVE. Positions 1 to 32 are disordered; it reads MSEEVSKRVEEEADTPGLEGQSDDSSDEGDAS. Residues 21-32 show a composition bias toward acidic residues; sequence QSDDSSDEGDAS. The 281-residue stretch at 55–335 folds into the Deacetylase sirtuin-type domain; sequence KVLDELTLDS…MTLAELLGWK (281 aa). NAD(+) is bound by residues 83–87, 93–95, and 165–168; these read AGIST, DFR, and QNID. Residue His185 is the Proton acceptor of the active site. Positions 193, 198, 219, and 222 each coordinate Zn(2+). Residues 260-261, 284-286, and Cys321 contribute to the NAD(+) site; these read TS and NME. The segment covering 349–361 has biased composition (basic and acidic residues); it reads IDSKDAKKTDKEA. Residues 349–379 are disordered; that stretch reads IDSKDAKKTDKEASQSSKSAVAEAEKTDKTE.

Belongs to the sirtuin family. Class I subfamily. It depends on Zn(2+) as a cofactor.

The protein localises to the cytoplasm. It localises to the nucleus. The enzyme catalyses N(6)-acetyl-L-lysyl-[protein] + NAD(+) + H2O = 2''-O-acetyl-ADP-D-ribose + nicotinamide + L-lysyl-[protein]. It catalyses the reaction N(6)-tetradecanoyl-L-lysyl-[protein] + NAD(+) + H2O = 2''-O-tetradecanoyl-ADP-D-ribose + nicotinamide + L-lysyl-[protein]. It carries out the reaction N(6)-hexadecanoyl-L-lysyl-[protein] + NAD(+) + H2O = 2''-O-hexadecanoyl-ADP-D-ribose + nicotinamide + L-lysyl-[protein]. In terms of biological role, NAD-dependent protein deacetylase, which deacetylates internal lysines on histone and alpha-tubulin as well as many other proteins such as key transcription factors. Participates in the modulation of multiple and diverse biological processes such as cell cycle control, genomic integrity, microtubule dynamics, cell differentiation, metabolic networks, and autophagy. Plays a major role in the control of cell cycle progression and genomic stability. Deacetylates histone H4 at 'Lys-16' (H4K16ac) at the VEGFA promoter. Thereby contributes to regulate expression of vegfa, a key regulator of angiogenesis. In addition to protein deacetylase activity, also has activity toward long-chain fatty acyl groups and mediates protein-lysine demyristoylation and depalmitoylation of target proteins. The chain is NAD-dependent protein deacetylase sirtuin-2 (sirt2) from Danio rerio (Zebrafish).